A 444-amino-acid chain; its full sequence is Radical S-adenosyl methionine domain-containing protein 1, mitochondrial (444 aa).

The N-terminal 39 residues, 1 to 39, are a transit peptide targeting the mitochondrion; the sequence is MSTRVLTLTLLKKRHLMQCFWSTVGSVHLRSIASDKIPS. Positions 40–274 constitute a Radical SAM core domain; it reads HAVEASLYVH…CRVLEESGFH (235 aa). Tyr-47 provides a ligand contact to S-adenosyl-L-methionine. Cys-53, Cys-57, and Cys-60 together coordinate [4Fe-4S] cluster. S-adenosyl-L-methionine-binding positions include Gly-102, 103–104, Glu-135, Gln-162, Arg-174, and Asp-199; that span reads GT.

The protein belongs to the anaerobic coproporphyrinogen-III oxidase family. HemW subfamily. [4Fe-4S] cluster is required as a cofactor.

It is found in the mitochondrion. Its function is as follows. May be a heme chaperone, appears to bind heme. Homologous bacterial proteins do not have oxygen-independent coproporphyrinogen-III oxidase activity. Binds 1 [4Fe-4S] cluster. The cluster is coordinated with 3 cysteines and an exchangeable S-adenosyl-L-methionine. The polypeptide is Radical S-adenosyl methionine domain-containing protein 1, mitochondrial (rsad1) (Danio rerio (Zebrafish)).